Reading from the N-terminus, the 66-residue chain is Vesicular acetylcholine transporter (66 aa).

A helical membrane pass occupies residues 1–15 (GMGLANLLYAPVLLL). The Cytoplasmic portion of the chain corresponds to 16 to 66 (LRNVGLLTRSRSERDVLLDEPPQGLYDAVRLRERPVSGQDGEPRSPPGPFD). The disordered stretch occupies residues 43-66 (AVRLRERPVSGQDGEPRSPPGPFD).

This sequence belongs to the major facilitator superfamily. Vesicular transporter family. In terms of assembly, interacts with SEC14L1.

It localises to the cytoplasmic vesicle. It is found in the secretory vesicle. The protein resides in the synaptic vesicle membrane. It carries out the reaction acetylcholine(out) + 2 H(+)(in) = acetylcholine(in) + 2 H(+)(out). The enzyme catalyses choline(in) + 2 H(+)(out) = choline(out) + 2 H(+)(in). The catalysed reaction is serotonin(in) + 2 H(+)(out) = serotonin(out) + 2 H(+)(in). Its function is as follows. Electrogenic antiporter that exchanges one cholinergic neurotransmitter, acetylcholine or choline, with two intravesicular protons across the membrane of synaptic vesicles. Uses the electrochemical proton gradient established by the V-type proton-pump ATPase to store neurotransmitters inside the vesicles prior to their release via exocytosis. Determines cholinergic vesicular quantal size at presynaptic nerve terminals in developing neuro-muscular junctions with an impact on motor neuron differentiation and innervation pattern. Part of forebrain cholinergic system, regulates hippocampal synapse transmissions that underlie spatial memory formation. Can transport serotonin. The sequence is that of Vesicular acetylcholine transporter (SLC18A3) from Macaca fuscata fuscata (Japanese macaque).